Reading from the N-terminus, the 208-residue chain is Uracil phosphoribosyltransferase (208 aa).

Residues Arg-77, Arg-102, and 129–137 each bind 5-phospho-alpha-D-ribose 1-diphosphate; that span reads DPMLATGNS. Uracil is bound by residues Ile-193 and 198 to 200; that span reads GDA. Position 199 (Asp-199) interacts with 5-phospho-alpha-D-ribose 1-diphosphate.

It belongs to the UPRTase family. Requires Mg(2+) as cofactor.

It catalyses the reaction UMP + diphosphate = 5-phospho-alpha-D-ribose 1-diphosphate + uracil. Its pathway is pyrimidine metabolism; UMP biosynthesis via salvage pathway; UMP from uracil: step 1/1. With respect to regulation, allosterically activated by GTP. Functionally, catalyzes the conversion of uracil and 5-phospho-alpha-D-ribose 1-diphosphate (PRPP) to UMP and diphosphate. This is Uracil phosphoribosyltransferase from Mycoplasmopsis agalactiae (strain NCTC 10123 / CIP 59.7 / PG2) (Mycoplasma agalactiae).